We begin with the raw amino-acid sequence, 462 residues long: MTQKTRTRFAPSPTGFIHLGNIRSALYPWAFARSTGGDFILRIEDTDLDRSTQAAVDVIIESMSWLGLDYDEGPFYQMQRMDRYKTVLAELQAAGHVYPCYMSVAELDALRDAQMAAKEKPRYDGTWRPAPGKTLPPIPEGVKPVLRFKNPLGGSVVWDDKVKGRIEISNDELDDLVIARPDGTPTYNFCVVVDDLDMAITHVIRGDDHVNNTPRQINIFKALGQEPPVYAHLPTVLNEQGEKMSKRNGAKPVTQYRDEGYLPDAMVNYLARLGWSHGDDEIFSRAQFLQWFNLDHLGRSAAQFDEAKLRWVNAQHLKIMSDDALAPLVQAQLQKRGIQADERLPRICALFKDRCDTTVVLADWAAAFYADITLNPAEVSQHVTDAIKPALNLLSEKLASCSWDKLSIAAAIKEVLVACAIKMPLLAMPVRVLVMGSAHTPSLDAVLELCEREKVLTRLRSE.

Positions 11 to 21 (PSPTGFIHLGN) match the 'HIGH' region motif. The 'KMSKS' region signature appears at 243 to 247 (KMSKR). Position 246 (Lys246) interacts with ATP.

This sequence belongs to the class-I aminoacyl-tRNA synthetase family. Glutamate--tRNA ligase type 1 subfamily. As to quaternary structure, monomer.

The protein localises to the cytoplasm. It carries out the reaction tRNA(Glu) + L-glutamate + ATP = L-glutamyl-tRNA(Glu) + AMP + diphosphate. Catalyzes the attachment of glutamate to tRNA(Glu) in a two-step reaction: glutamate is first activated by ATP to form Glu-AMP and then transferred to the acceptor end of tRNA(Glu). The chain is Glutamate--tRNA ligase from Albidiferax ferrireducens (strain ATCC BAA-621 / DSM 15236 / T118) (Rhodoferax ferrireducens).